Reading from the N-terminus, the 692-residue chain is Methionine--tRNA ligase (692 aa).

Residues 12–22 (PYANGSFHIGH) carry the 'HIGH' region motif. Zn(2+) is bound by residues Cys143, Cys146, Cys156, and Cys159. The 'KMSKS' region motif lies at 341-345 (KMSKS). Residue Lys344 coordinates ATP. In terms of domain architecture, tRNA-binding spans 586 to 692 (DFAKIDLRIA…PGAQPGMRVR (107 aa)).

The protein belongs to the class-I aminoacyl-tRNA synthetase family. MetG type 1 subfamily. Homodimer. Zn(2+) is required as a cofactor.

It is found in the cytoplasm. It catalyses the reaction tRNA(Met) + L-methionine + ATP = L-methionyl-tRNA(Met) + AMP + diphosphate. Functionally, is required not only for elongation of protein synthesis but also for the initiation of all mRNA translation through initiator tRNA(fMet) aminoacylation. This Bordetella pertussis (strain Tohama I / ATCC BAA-589 / NCTC 13251) protein is Methionine--tRNA ligase.